Consider the following 132-residue polypeptide: ATP synthase epsilon chain, chloroplastic (132 aa).

It belongs to the ATPase epsilon chain family. F-type ATPases have 2 components, CF(1) - the catalytic core - and CF(0) - the membrane proton channel. CF(1) has five subunits: alpha(3), beta(3), gamma(1), delta(1), epsilon(1). CF(0) has three main subunits: a, b and c.

It localises to the plastid. The protein resides in the chloroplast thylakoid membrane. In terms of biological role, produces ATP from ADP in the presence of a proton gradient across the membrane. The sequence is that of ATP synthase epsilon chain, chloroplastic from Pylaiella littoralis (Seaweed).